The following is a 4579-amino-acid chain: Sacsin (4579 aa).

The Ubiquitin-like domain occupies 9 to 84; the sequence is VPVTVLPGCV…FVNLQSKGLK (76 aa). K943 bears the N6-acetyllysine mark. A phosphoserine mark is found at S1779 and S2511. T2516 is modified (phosphothreonine). Position 3435 is a phosphoserine (S3435). 2 disordered regions span residues 4248–4273 and 4279–4298; these read PEES…TPGL and LFSG…PKKL. Polar residues predominate over residues 4254–4267; the sequence is SRDSAPSTPTSPTE. At T4261 the chain carries Phosphothreonine. A Phosphoserine modification is found at S4264. Basic residues predominate over residues 4288–4298; the sequence is TSSKHQSPKKL. Positions 4306 to 4393 constitute a J domain; that stretch reads ILKEVTSVVE…ASRFQSDKYS (88 aa). Residues 4405-4427 form a disordered region; it reads ATSHKSERQQQNKEKCPPSAGQT. A compositionally biased stretch (basic and acidic residues) spans 4406–4420; sequence TSHKSERQQQNKEKC. The HEPN domain maps to 4451–4567; it reads LRQARANFSA…MRVMECTACI (117 aa).

As to expression, highly expressed in the central nervous system. Also found in skeletal muscle and at low levels in pancreas.

It is found in the cytoplasm. Functionally, co-chaperone which acts as a regulator of the Hsp70 chaperone machinery and may be involved in the processing of other ataxia-linked proteins. The sequence is that of Sacsin (SACS) from Homo sapiens (Human).